Consider the following 634-residue polypeptide: Ras and EF-hand domain-containing protein homolog (634 aa).

EF-hand domains are found at residues 5-33 and 33-68; these read DVEN…CPQL and LDDN…TVQH. Residues Asp-46, Asp-48, Ser-50, Lys-52, and Glu-57 each contribute to the Ca(2+) site. Positions 169–310 form a coiled coil; the sequence is LSEKKHENER…RADFDQKQDE (142 aa). 2 disordered regions span residues 216–237 and 308–328; these read ERER…EMSE and QDEL…SESV. GTP-binding positions include 449–454, 552–555, and 585–586; these read AVGKSS, NKVD, and AL. The propeptide at 632–634 is removed in mature form; sequence RGS.

The protein belongs to the small GTPase superfamily. Rab family. In terms of assembly, homodimer.

It localises to the cytoplasm. The protein localises to the perinuclear region. Binds GTP and GDP. Plays a role in uterine seam cell development. This is Ras and EF-hand domain-containing protein homolog from Caenorhabditis briggsae.